Consider the following 1847-residue polypeptide: Peripheral-type benzodiazepine receptor-associated protein 1 (1847 aa).

Disordered stretches follow at residues Glu57–Thr81, Asn282–Val318, and Ser560–Ser626. 2 stretches are compositionally biased toward low complexity: residues Gly294 to Gly310 and Ser600 to Ser613. Residues Ala651–Asp718 enclose the SH3 1 domain. Positions Glu728–Leu787 are disordered. Gly residues predominate over residues Ser744–Ser757. Fibronectin type-III domains follow at residues Val789 to Gly880, Val882 to Ala974, and Ala979 to Ala1077. Disordered stretches follow at residues Leu1107 to Asp1174, Asp1191 to Arg1215, Asn1240 to Gln1307, Phe1322 to Leu1478, and Pro1514 to Asp1616. Residues Thr1122–Met1133 show a composition bias toward polar residues. Basic and acidic residues predominate over residues Leu1203 to Arg1215. Residues Asp1253–Glu1266 are compositionally biased toward acidic residues. Residues Trp1272 to Gly1284 are compositionally biased toward polar residues. Acidic residues-rich tracts occupy residues Cys1296 to Leu1305 and Pro1325 to Glu1335. The segment covering Pro1340–Pro1352 has biased composition (low complexity). 2 stretches are compositionally biased toward basic and acidic residues: residues Arg1412–Ser1421 and Ala1546–Gly1578. Positions Leu1617–Val1685 constitute an SH3 2 domain. 2 disordered regions span residues Pro1701–Pro1747 and Leu1818–Cys1847. In terms of domain architecture, SH3 3 spans Lys1756–Pro1823.

Belongs to the RIMBP family. As to quaternary structure, interacts with RIMS1 and RIMS2. Interacts with TSPO. Interacts with CACNA1A. In terms of tissue distribution, specifically expressed in brain. High expression level in the limbic system such as the nucleus accumbens, septum, and hippocampus, as well as on the cerebellum and pineal gland. Abundant in the CA1 region of the hippocampus.

It is found in the cytoplasm. It localises to the mitochondrion. Required for synaptic transmission regulation. It probably controls the recruitement of voltage-gated calcium channels to the presynaptic membrane, and modulates neurotransmitter release. In Rattus norvegicus (Rat), this protein is Peripheral-type benzodiazepine receptor-associated protein 1.